A 337-amino-acid polypeptide reads, in one-letter code: Fructose-1,6-bisphosphatase class 1 (337 aa).

4 residues coordinate Mg(2+): Glu89, Asp112, Leu114, and Asp115. Substrate-binding positions include 115-118 (DGSS), Asn208, Tyr241, and Lys271. Mg(2+) is bound at residue Glu277.

Belongs to the FBPase class 1 family. In terms of assembly, homotetramer. The cofactor is Mg(2+).

The protein resides in the cytoplasm. It carries out the reaction beta-D-fructose 1,6-bisphosphate + H2O = beta-D-fructose 6-phosphate + phosphate. Its pathway is carbohydrate biosynthesis; gluconeogenesis. In Yersinia enterocolitica serotype O:8 / biotype 1B (strain NCTC 13174 / 8081), this protein is Fructose-1,6-bisphosphatase class 1.